The primary structure comprises 888 residues: DNA mismatch repair protein MutS (888 aa).

The interval 249–271 (IGQRPPLSPPSREASGSTMAIDP) is disordered. Position 638–645 (638–645 (GPNMAGKS)) interacts with ATP.

Belongs to the DNA mismatch repair MutS family.

In terms of biological role, this protein is involved in the repair of mismatches in DNA. It is possible that it carries out the mismatch recognition step. This protein has a weak ATPase activity. This chain is DNA mismatch repair protein MutS, found in Nitrobacter winogradskyi (strain ATCC 25391 / DSM 10237 / CIP 104748 / NCIMB 11846 / Nb-255).